The sequence spans 220 residues: 7-cyano-7-deazaguanine synthase (220 aa).

7-17 (LSGGMDSSITA) is a binding site for ATP. Zn(2+)-binding residues include Cys185, Cys193, Cys196, and Cys199.

The protein belongs to the QueC family. It depends on Zn(2+) as a cofactor.

It carries out the reaction 7-carboxy-7-deazaguanine + NH4(+) + ATP = 7-cyano-7-deazaguanine + ADP + phosphate + H2O + H(+). It functions in the pathway purine metabolism; 7-cyano-7-deazaguanine biosynthesis. Catalyzes the ATP-dependent conversion of 7-carboxy-7-deazaguanine (CDG) to 7-cyano-7-deazaguanine (preQ(0)). This is 7-cyano-7-deazaguanine synthase from Nitratiruptor sp. (strain SB155-2).